Here is a 316-residue protein sequence, read N- to C-terminus: 4-hydroxy-3-methylbut-2-enyl diphosphate reductase (316 aa).

Cys-12 provides a ligand contact to [4Fe-4S] cluster. (2E)-4-hydroxy-3-methylbut-2-enyl diphosphate-binding residues include His-41 and His-74. 2 residues coordinate dimethylallyl diphosphate: His-41 and His-74. The isopentenyl diphosphate site is built by His-41 and His-74. Cys-96 contacts [4Fe-4S] cluster. His-124 contacts (2E)-4-hydroxy-3-methylbut-2-enyl diphosphate. His-124 contributes to the dimethylallyl diphosphate binding site. Position 124 (His-124) interacts with isopentenyl diphosphate. Glu-126 functions as the Proton donor in the catalytic mechanism. Thr-167 lines the (2E)-4-hydroxy-3-methylbut-2-enyl diphosphate pocket. Position 197 (Cys-197) interacts with [4Fe-4S] cluster. (2E)-4-hydroxy-3-methylbut-2-enyl diphosphate is bound by residues Ser-225, Ser-226, Asn-227, and Ser-269. Residues Ser-225, Ser-226, Asn-227, and Ser-269 each contribute to the dimethylallyl diphosphate site. Isopentenyl diphosphate is bound by residues Ser-225, Ser-226, Asn-227, and Ser-269.

This sequence belongs to the IspH family. In terms of assembly, homodimer. It depends on [4Fe-4S] cluster as a cofactor.

It carries out the reaction isopentenyl diphosphate + 2 oxidized [2Fe-2S]-[ferredoxin] + H2O = (2E)-4-hydroxy-3-methylbut-2-enyl diphosphate + 2 reduced [2Fe-2S]-[ferredoxin] + 2 H(+). The catalysed reaction is dimethylallyl diphosphate + 2 oxidized [2Fe-2S]-[ferredoxin] + H2O = (2E)-4-hydroxy-3-methylbut-2-enyl diphosphate + 2 reduced [2Fe-2S]-[ferredoxin] + 2 H(+). Its pathway is isoprenoid biosynthesis; dimethylallyl diphosphate biosynthesis; dimethylallyl diphosphate from (2E)-4-hydroxy-3-methylbutenyl diphosphate: step 1/1. It participates in isoprenoid biosynthesis; isopentenyl diphosphate biosynthesis via DXP pathway; isopentenyl diphosphate from 1-deoxy-D-xylulose 5-phosphate: step 6/6. Functionally, catalyzes the conversion of 1-hydroxy-2-methyl-2-(E)-butenyl 4-diphosphate (HMBPP) into a mixture of isopentenyl diphosphate (IPP) and dimethylallyl diphosphate (DMAPP). Acts in the terminal step of the DOXP/MEP pathway for isoprenoid precursor biosynthesis. This chain is 4-hydroxy-3-methylbut-2-enyl diphosphate reductase, found in Sodalis glossinidius (strain morsitans).